The sequence spans 444 residues: sn-glycerol-3-phosphate-binding periplasmic protein UgpB (444 aa).

A signal peptide spans 1–30; that stretch reads MFNNTIRKTHAIRTAAACVAFALMSAGAQA. 7 residues coordinate sn-glycerol 3-phosphate: tyrosine 72, glutamate 96, serine 151, serine 277, glycine 314, tyrosine 353, and arginine 404.

The protein belongs to the bacterial solute-binding protein 1 family. In terms of assembly, the complex is composed of two ATP-binding proteins (UgpC), two transmembrane proteins (UgpA and UgpE) and a solute-binding protein (UgpB).

The protein resides in the periplasm. Functionally, part of the ABC transporter complex UgpBAEC involved in sn-glycerol-3-phosphate (G3P) import. Binds G3P. The chain is sn-glycerol-3-phosphate-binding periplasmic protein UgpB (ugpB) from Pectobacterium atrosepticum (strain SCRI 1043 / ATCC BAA-672) (Erwinia carotovora subsp. atroseptica).